The primary structure comprises 32 residues: U6-ctenitoxin-Pr1a (32 aa).

3 disulfide bridges follow: cysteine 3–cysteine 17, cysteine 10–cysteine 21, and cysteine 16–cysteine 30.

Expressed by the venom gland.

It is found in the secreted. The sequence is that of U6-ctenitoxin-Pr1a from Phoneutria reidyi (Brazilian Amazonian armed spider).